The primary structure comprises 326 residues: Vitamin B12 import system permease protein BtuC (326 aa).

Helical transmembrane passes span 17-39 (LSLSLLVLLATLLSLCAGEQWIA), 59-81 (RTLAVLLVGAALALSGAVMQALF), 88-107 (PGLLGVSNGAGVGLIAAVLL), 111-133 (QLAGWALGLCAIAGALIITLILL), 146-168 (LLAGVALGIICSALMTWAIYFST), 188-205 (WQQSWLMIALIPVLIWIC), 242-264 (MVGVSVAMAGAIGFIGLVIPHIL), 274-296 (VLLPGCALAGAIALLLADVVARL), and 303-322 (LPIGVVTATLGAPVFIWLLL).

Belongs to the binding-protein-dependent transport system permease family. FecCD subfamily. The complex is composed of two ATP-binding proteins (BtuD), two transmembrane proteins (BtuC) and a solute-binding protein (BtuF).

It localises to the cell inner membrane. Part of the ABC transporter complex BtuCDF involved in vitamin B12 import. Involved in the translocation of the substrate across the membrane. The chain is Vitamin B12 import system permease protein BtuC from Salmonella paratyphi A (strain ATCC 9150 / SARB42).